Reading from the N-terminus, the 411-residue chain is MKAEILAIGTELLMGEIVNTNAQFLAEKLVDLGIYVYHQSVVGDNEERIMQAYELAFSRSDLLIVTGGLGPTKDDMTKEVAAKFFKRELVLHPESLEIMKTFFDARNLPLNEGNIKQAYFPIGAKILPNPNGTAPGCMVEEGGKTFILLPGPPREMIPMYENHVVPHLKPYQKNVLVSKVLHIVGIGEGHMVEKIEDIIDGQNNPTVAPYAKAKGLTLRITASGQNQSIAEGLIKPVQEAIQERLGEDVYGEGDITLEEVVAKKLIEKKQTIAIAESCTGGMLSGRLTNYPGISSVFMEAMITYSNEAKIKRLDVSPQTIENYGAVSEETAKEMAIGMARTANADIGLSVTGIAGPGGGTVDKPVGLVYIGLYLNGQMQAKKLIVSGDRQRVRKLTTTYALDFLRRQLMKV.

The protein belongs to the CinA family.

This chain is Putative competence-damage inducible protein, found in Alkaliphilus metalliredigens (strain QYMF).